The primary structure comprises 523 residues: Cyclin-dependent kinase 17 (523 aa).

A Phosphoserine modification is found at Ser-9. Residues 30-55 (TIEESSSKDNEPIVKNGRPPTSHSVH) form a disordered region. A phosphoserine mark is found at Ser-80, Ser-92, and Ser-105. Residues 103-123 (MGSDGESDQASGTSSDEVQSP) are disordered. Over residues 110-123 (DQASGTSSDEVQSP) the composition is skewed to polar residues. 4 positions are modified to phosphoserine: Ser-137, Ser-146, Ser-165, and Ser-180. Residues 192–473 (YIKLEKLGEG…AEEAMKHVYF (282 aa)) enclose the Protein kinase domain. ATP is bound by residues 198–206 (LGEGTYATV) and Lys-221. Asp-313 serves as the catalytic Proton acceptor. The disordered stretch occupies residues 501 to 523 (PGFRNSSYPETGHGKNRRQSMLF). Basic residues predominate over residues 514 to 523 (GKNRRQSMLF).

The protein belongs to the protein kinase superfamily. CMGC Ser/Thr protein kinase family. CDC2/CDKX subfamily. Found in a complex containing CABLES1, CDK16 and TDRD7. Interacts with TDRD7.

The catalysed reaction is L-seryl-[protein] + ATP = O-phospho-L-seryl-[protein] + ADP + H(+). It catalyses the reaction L-threonyl-[protein] + ATP = O-phospho-L-threonyl-[protein] + ADP + H(+). Functionally, may play a role in terminally differentiated neurons. Has a Ser/Thr-phosphorylating activity for histone H1. The chain is Cyclin-dependent kinase 17 (Cdk17) from Mus musculus (Mouse).